The chain runs to 200 residues: Holliday junction resolvase RecU (200 aa).

The interval 1–27 is disordered; the sequence is MALKYPSGKEYRGNKPNAARRPAADYA. Threonine 84, aspartate 86, glutamate 99, and glutamine 118 together coordinate Mg(2+).

Belongs to the RecU family. As to quaternary structure, homodimer. Mg(2+) is required as a cofactor.

Its subcellular location is the cytoplasm. The catalysed reaction is Endonucleolytic cleavage at a junction such as a reciprocal single-stranded crossover between two homologous DNA duplexes (Holliday junction).. In terms of biological role, endonuclease that resolves Holliday junction intermediates in genetic recombination. Cleaves mobile four-strand junctions by introducing symmetrical nicks in paired strands. Promotes annealing of linear ssDNA with homologous dsDNA. Required for DNA repair, homologous recombination and chromosome segregation. The polypeptide is Holliday junction resolvase RecU (Geobacillus kaustophilus (strain HTA426)).